Consider the following 624-residue polypeptide: tRNA uridine 5-carboxymethylaminomethyl modification enzyme MnmG (624 aa).

Residues 14–19 (GGGHAG), Val-126, and Ser-181 each bind FAD. Position 273 to 287 (273 to 287 (GPRYCPSIEDKVVRF)) interacts with NAD(+). Residue Gln-370 participates in FAD binding.

This sequence belongs to the MnmG family. As to quaternary structure, homodimer. Heterotetramer of two MnmE and two MnmG subunits. The cofactor is FAD.

It is found in the cytoplasm. Its function is as follows. NAD-binding protein involved in the addition of a carboxymethylaminomethyl (cmnm) group at the wobble position (U34) of certain tRNAs, forming tRNA-cmnm(5)s(2)U34. The chain is tRNA uridine 5-carboxymethylaminomethyl modification enzyme MnmG from Geotalea uraniireducens (strain Rf4) (Geobacter uraniireducens).